A 294-amino-acid polypeptide reads, in one-letter code: Potassium-transporting ATPase subunit beta (294 aa).

Topologically, residues 1 to 36 (MAALQEKKSCSQRMAEFRHYCWNPDTGQMLGRTPAR) are cytoplasmic. A helical; Signal-anchor for type II membrane protein transmembrane segment spans residues 37 to 57 (WVWISLYYAGFYVVMTGLFAL). At 58 to 294 (CIYVLMQTID…KVEFKLTIQK (237 aa)) the chain is on the extracellular side. N-linked (GlcNAc...) asparagine glycosylation is found at Asn99, Asn103, Asn130, Asn146, and Asn161. Cys131 and Cys152 are oxidised to a cystine. Cys162 and Cys178 form a disulfide bridge. N-linked (GlcNAc...) asparagine glycosylation is found at Asn193 and Asn225. Residues 194 to 294 (NTAPRVDCTF…KVEFKLTIQK (101 aa)) are immunoglobulin-like. Cysteines 201 and 266 form a disulfide.

Belongs to the X(+)/potassium ATPases subunit beta family. As to quaternary structure, the ATPase pump is composed of two subunits: alpha (catalytic) and beta (regulatory). Interacts with alpha subunit ATP12A; this interaction is required for the formation of a functionally active pump and targeting at the plasma membrane. Interacts (via N-terminus) with alpha subunit ATP4A (via the P-domain). Post-translationally, N-glycosylation is necessary for assembly and functional expression of the pump at the plasma membrane. As to expression, expressed in parietal cells (at protein level).

The protein localises to the apical cell membrane. It is found in the cell membrane. Functionally, the beta subunit of the gastric H(+)/K(+) ATPase pump which transports H(+) ions in exchange for K(+) ions across the apical membrane of parietal cells. Plays a structural and regulatory role in the assembly and membrane targeting of a functionally active pump. Within a transport cycle, the transfer of a H(+) ion across the membrane is coupled to ATP hydrolysis and is associated with a transient phosphorylation of the alpha subunit that shifts the pump conformation from inward-facing (E1) to outward-facing state (E2). Interacts with the phosphorylation domain of the alpha subunit and functions as a ratchet, stabilizing the lumenal-open E2 conformation and preventing the reverse reaction of the transport cycle. This chain is Potassium-transporting ATPase subunit beta (Atp4b), found in Mus musculus (Mouse).